A 373-amino-acid polypeptide reads, in one-letter code: Lipoyl synthase (373 aa).

A disordered region spans residues 14 to 36 (VSNDHPSSSPLQPGVKQSGEDKI). Positions 81, 86, 92, 107, 111, 114, and 323 each coordinate [4Fe-4S] cluster. Residues 93–312 (FSHGTATFMI…EEYGMALGFS (220 aa)) form the Radical SAM core domain. The disordered stretch occupies residues 346–373 (PAVSSTEHRERNTIASKSASKTESIHHR). Over residues 358–367 (TIASKSASKT) the composition is skewed to polar residues.

This sequence belongs to the radical SAM superfamily. Lipoyl synthase family. The cofactor is [4Fe-4S] cluster.

It is found in the cytoplasm. The catalysed reaction is [[Fe-S] cluster scaffold protein carrying a second [4Fe-4S](2+) cluster] + N(6)-octanoyl-L-lysyl-[protein] + 2 oxidized [2Fe-2S]-[ferredoxin] + 2 S-adenosyl-L-methionine + 4 H(+) = [[Fe-S] cluster scaffold protein] + N(6)-[(R)-dihydrolipoyl]-L-lysyl-[protein] + 4 Fe(3+) + 2 hydrogen sulfide + 2 5'-deoxyadenosine + 2 L-methionine + 2 reduced [2Fe-2S]-[ferredoxin]. Its pathway is protein modification; protein lipoylation via endogenous pathway; protein N(6)-(lipoyl)lysine from octanoyl-[acyl-carrier-protein]: step 2/2. In terms of biological role, catalyzes the radical-mediated insertion of two sulfur atoms into the C-6 and C-8 positions of the octanoyl moiety bound to the lipoyl domains of lipoate-dependent enzymes, thereby converting the octanoylated domains into lipoylated derivatives. In Xylella fastidiosa (strain M23), this protein is Lipoyl synthase.